Reading from the N-terminus, the 46-residue chain is Defensin-1 (46 aa).

Cystine bridges form between Cys3/Cys46, Cys14/Cys35, Cys20/Cys40, and Cys24/Cys42.

Belongs to the DEFL family. As to expression, epidermis and vascular bundles of pods, stems, roots, leaves and wet or dry seeds.

In terms of biological role, possesses antifungal activity sensitive to inorganic cations. This is Defensin-1 from Pisum sativum (Garden pea).